The following is a 346-amino-acid chain: Biotin synthase (346 aa).

The 219-residue stretch at 38–256 (RQVQVSTLLS…IAVARIMMPT (219 aa)) folds into the Radical SAM core domain. [4Fe-4S] cluster contacts are provided by cysteine 53, cysteine 57, and cysteine 60. Residues cysteine 97, cysteine 128, cysteine 188, and arginine 260 each coordinate [2Fe-2S] cluster.

This sequence belongs to the radical SAM superfamily. Biotin synthase family. As to quaternary structure, homodimer. The cofactor is [4Fe-4S] cluster. Requires [2Fe-2S] cluster as cofactor.

The catalysed reaction is (4R,5S)-dethiobiotin + (sulfur carrier)-SH + 2 reduced [2Fe-2S]-[ferredoxin] + 2 S-adenosyl-L-methionine = (sulfur carrier)-H + biotin + 2 5'-deoxyadenosine + 2 L-methionine + 2 oxidized [2Fe-2S]-[ferredoxin]. It participates in cofactor biosynthesis; biotin biosynthesis; biotin from 7,8-diaminononanoate: step 2/2. In terms of biological role, catalyzes the conversion of dethiobiotin (DTB) to biotin by the insertion of a sulfur atom into dethiobiotin via a radical-based mechanism. The chain is Biotin synthase from Shigella flexneri serotype 5b (strain 8401).